Consider the following 290-residue polypeptide: 33 kDa chaperonin (290 aa).

Disulfide bonds link Cys-235-Cys-237 and Cys-268-Cys-271.

This sequence belongs to the HSP33 family. In terms of processing, under oxidizing conditions two disulfide bonds are formed involving the reactive cysteines. Under reducing conditions zinc is bound to the reactive cysteines and the protein is inactive.

The protein resides in the cytoplasm. In terms of biological role, redox regulated molecular chaperone. Protects both thermally unfolding and oxidatively damaged proteins from irreversible aggregation. Plays an important role in the bacterial defense system toward oxidative stress. This Streptococcus pyogenes serotype M49 (strain NZ131) protein is 33 kDa chaperonin.